The chain runs to 331 residues: Probable zinc-binding oxidoreductase, mitochondrial (331 aa).

Over residues 1-29 (MASVTSVPKTGRSVNQDVPATTLTLQTRP) the composition is skewed to polar residues. The tract at residues 1–34 (MASVTSVPKTGRSVNQDVPATTLTLQTRPTPAPN) is disordered.

This sequence belongs to the zinc-containing alcohol dehydrogenase family. Quinone oxidoreductase subfamily.

The protein localises to the mitochondrion. This is Probable zinc-binding oxidoreductase, mitochondrial from Arthroderma benhamiae (strain ATCC MYA-4681 / CBS 112371) (Trichophyton mentagrophytes).